Here is a 365-residue protein sequence, read N- to C-terminus: Outer membrane protein assembly factor BamC (365 aa).

The first 16 residues, 1-16 (MLKKVTPLFLVAAVAA), serve as a signal peptide directing secretion. A lipid anchor (N-palmitoyl cysteine) is attached at cysteine 17. Cysteine 17 carries S-diacylglycerol cysteine lipidation.

Belongs to the BamC family. Part of the Bam complex.

It is found in the cell outer membrane. Part of the outer membrane protein assembly complex, which is involved in assembly and insertion of beta-barrel proteins into the outer membrane. This is Outer membrane protein assembly factor BamC from Shewanella oneidensis (strain ATCC 700550 / JCM 31522 / CIP 106686 / LMG 19005 / NCIMB 14063 / MR-1).